Here is a 133-residue protein sequence, read N- to C-terminus: ATP synthase epsilon chain (133 aa).

It belongs to the ATPase epsilon chain family. In terms of assembly, F-type ATPases have 2 components, CF(1) - the catalytic core - and CF(0) - the membrane proton channel. CF(1) has five subunits: alpha(3), beta(3), gamma(1), delta(1), epsilon(1). CF(0) has three main subunits: a, b and c.

Its subcellular location is the cell membrane. In terms of biological role, produces ATP from ADP in the presence of a proton gradient across the membrane. The chain is ATP synthase epsilon chain from Staphylococcus haemolyticus (strain JCSC1435).